The sequence spans 366 residues: G-protein coupled receptor 183 (366 aa).

At 1–37 (MQVMRTFNQPPTSSHPTPTLNDSDTCITLYNHRGYAR) the chain is on the extracellular side. Asn21 is a glycosylation site (N-linked (GlcNAc...) asparagine). The helical transmembrane segment at 38-63 (VLMPLFYCIVFFVGLLGNALAFHIIR) threads the bilayer. Residues 64 to 83 (PNVKKINSTTLYSANLVISD) lie on the Cytoplasmic side of the membrane. A helical transmembrane segment spans residues 84 to 101 (ILFTLSLPLRIIYYALGF). Over 102–111 (HWPLGETLCK) the chain is Extracellular. The cysteines at positions 110 and 188 are disulfide-linked. A helical membrane pass occupies residues 112–133 (IVGLIFYINTYAGVNFMTCLSV). The Cytoplasmic segment spans residues 134 to 155 (DRFIAVVLPLRFARFRKVSNVR). Residues 156-174 (YICVGVWLLVLMQTLPLLS) traverse the membrane as a helical segment. At 175 to 199 (MPMTNEEPDGFITCMEYPNFEPVPN) the chain is on the extracellular side. The chain crosses the membrane as a helical span at residues 200 to 222 (ISYILIGAVFLGYGVPVVTILVC). Topologically, residues 223-248 (YSILCCKLRLAAKANQLTDKSGRSQK) are cytoplasmic. Residues 249 to 272 (AIGVICCVSLVFVVCFSPYHIDLL) form a helical membrane-spanning segment. Topologically, residues 273–292 (QYMIRKLIYTPDCAELTAFQ) are extracellular. The chain crosses the membrane as a helical span at residues 293–317 (ISLHFTVCLMNLNSCLDPFIYFFAC). The Cytoplasmic portion of the chain corresponds to 318–366 (KGYKTKVLKILKRQVSVSFSSAARTLPEGLSRDISDGNKIHLNSTRHKE).

It belongs to the G-protein coupled receptor 1 family.

The protein localises to the cell membrane. In terms of biological role, G-protein coupled receptor expressed in lymphocytes that acts as a chemotactic receptor for B-cells, T-cells, splenic dendritic cells, monocytes/macrophages and astrocytes. Receptor for oxysterol 7-alpha,25-dihydroxycholesterol (7-alpha,25-OHC) and other related oxysterols. Mediates cell positioning and movement of a number of cells by binding the 7-alpha,25-OHC ligand that forms a chemotactic gradient. Binding of 7-alpha,25-OHC mediates the correct localization of B-cells during humoral immune responses. The polypeptide is G-protein coupled receptor 183 (gpr183) (Salmo salar (Atlantic salmon)).